The chain runs to 252 residues: Triosephosphate isomerase (252 aa).

Residue 10-12 (NWK) coordinates substrate. His-96 acts as the Electrophile in catalysis. The Proton acceptor role is filled by Glu-168. Residues Gly-174, Ser-214, and 235–236 (GG) contribute to the substrate site.

Belongs to the triosephosphate isomerase family. In terms of assembly, homodimer.

The protein resides in the cytoplasm. The catalysed reaction is D-glyceraldehyde 3-phosphate = dihydroxyacetone phosphate. The protein operates within carbohydrate biosynthesis; gluconeogenesis. It functions in the pathway carbohydrate degradation; glycolysis; D-glyceraldehyde 3-phosphate from glycerone phosphate: step 1/1. Its function is as follows. Involved in the gluconeogenesis. Catalyzes stereospecifically the conversion of dihydroxyacetone phosphate (DHAP) to D-glyceraldehyde-3-phosphate (G3P). This chain is Triosephosphate isomerase, found in Lactococcus lactis subsp. cremoris (strain MG1363).